We begin with the raw amino-acid sequence, 301 residues long: UDP-N-acetylenolpyruvoylglucosamine reductase (301 aa).

In terms of domain architecture, FAD-binding PCMH-type spans 30–194; the sequence is VGGEADYLVF…LSVKFALAPG (165 aa). Residue Arg-173 is part of the active site. Ser-223 serves as the catalytic Proton donor. Glu-293 is an active-site residue.

The protein belongs to the MurB family. FAD serves as cofactor.

The protein localises to the cytoplasm. The enzyme catalyses UDP-N-acetyl-alpha-D-muramate + NADP(+) = UDP-N-acetyl-3-O-(1-carboxyvinyl)-alpha-D-glucosamine + NADPH + H(+). It functions in the pathway cell wall biogenesis; peptidoglycan biosynthesis. Cell wall formation. The protein is UDP-N-acetylenolpyruvoylglucosamine reductase of Streptococcus pneumoniae (strain 70585).